The chain runs to 367 residues: tRNA-dihydrouridine(20a/20b) synthase [NAD(P)+] (367 aa).

FMN-binding positions include 45-47 (PMV) and glutamine 99. Cysteine 128 acts as the Proton donor in catalysis. Residues lysine 169, histidine 197, 231–233 (NGD), and 255–256 (VR) each bind FMN.

Belongs to the Dus family. Dus4 subfamily. FMN serves as cofactor.

The catalysed reaction is 5,6-dihydrouridine(20a) in tRNA + NADP(+) = uridine(20a) in tRNA + NADPH + H(+). It carries out the reaction 5,6-dihydrouridine(20a) in tRNA + NAD(+) = uridine(20a) in tRNA + NADH + H(+). It catalyses the reaction 5,6-dihydrouridine(20b) in tRNA + NAD(+) = uridine(20b) in tRNA + NADH + H(+). The enzyme catalyses 5,6-dihydrouridine(20b) in tRNA + NADP(+) = uridine(20b) in tRNA + NADPH + H(+). The catalysed reaction is a 5,6-dihydrouridine in mRNA + NAD(+) = a uridine in mRNA + NADH + H(+). It carries out the reaction a 5,6-dihydrouridine in mRNA + NADP(+) = a uridine in mRNA + NADPH + H(+). Functionally, catalyzes the synthesis of dihydrouridine, a modified base found in the D-loop of most tRNAs. Specifically modifies U20a and U20b in cytoplasmic tRNAs. Also able to mediate dihydrouridylation of some mRNAs, thereby affecting their translation. This is tRNA-dihydrouridine(20a/20b) synthase [NAD(P)+] from Saccharomyces cerevisiae (strain ATCC 204508 / S288c) (Baker's yeast).